The primary structure comprises 344 residues: Selenide, water dikinase (344 aa).

Residue Cys-15 is part of the active site. ATP is bound by residues Lys-18 and 46–48 (TKD). Residue Asp-49 participates in Mg(2+) binding. Residues Asp-66, Asp-89, and 137-139 (GHS) contribute to the ATP site. Residue Asp-89 coordinates Mg(2+). Asp-225 contributes to the Mg(2+) binding site.

The protein belongs to the selenophosphate synthase 1 family. Class I subfamily. Homodimer. Requires Mg(2+) as cofactor.

It carries out the reaction hydrogenselenide + ATP + H2O = selenophosphate + AMP + phosphate + 2 H(+). Synthesizes selenophosphate from selenide and ATP. This chain is Selenide, water dikinase, found in Colwellia psychrerythraea (strain 34H / ATCC BAA-681) (Vibrio psychroerythus).